The sequence spans 407 residues: uncharacterized protein (407 aa).

The next 12 membrane-spanning stretches (helical) occupy residues 22-42, 51-71, 101-121, 126-146, 154-174, 179-199, 227-247, 258-278, 286-306, 309-329, 347-367, and 369-389; these read IVSVVSFTFICYLTIGLPLAV, LGFSAIVAGAAISVQYFATLA, ALLLSAFAFARWPAASIVLLV, VLGIGESLVGTGAILWGIGRV, VISWNGIATYGALAIGAPVGV, ALIPAVLGMLVIALAALGYYL, GLGLALGSAGFGSIATFITLY, LSLTVFGTLFIGARLLFANTI, VAIVSFAFECAGLLMLWLAPV, VALVGAALTGFGFALIFPALG, AYSVFLDLSLGITGPLAGYVA, and AFGYPQVFLCAAVAAAAGVAL.

Belongs to the major facilitator superfamily. YhhS family.

It is found in the cell inner membrane. This is an uncharacterized protein from Burkholderia pseudomallei (strain 1106a).